Reading from the N-terminus, the 323-residue chain is tRNA U34 carboxymethyltransferase (323 aa).

Carboxy-S-adenosyl-L-methionine is bound by residues Lys-91, Trp-105, Lys-110, Gly-130, 152–154, 181–182, Met-196, Tyr-200, and Arg-315; these read DPT and IE.

This sequence belongs to the class I-like SAM-binding methyltransferase superfamily. CmoB family. Homotetramer.

It catalyses the reaction carboxy-S-adenosyl-L-methionine + 5-hydroxyuridine(34) in tRNA = 5-carboxymethoxyuridine(34) in tRNA + S-adenosyl-L-homocysteine + H(+). In terms of biological role, catalyzes carboxymethyl transfer from carboxy-S-adenosyl-L-methionine (Cx-SAM) to 5-hydroxyuridine (ho5U) to form 5-carboxymethoxyuridine (cmo5U) at position 34 in tRNAs. The protein is tRNA U34 carboxymethyltransferase of Escherichia coli O139:H28 (strain E24377A / ETEC).